Here is a 335-residue protein sequence, read N- to C-terminus: Tetraacyldisaccharide 4'-kinase (335 aa).

59-66 (TAGGNGKT) serves as a coordination point for ATP.

The protein belongs to the LpxK family.

The catalysed reaction is a lipid A disaccharide + ATP = a lipid IVA + ADP + H(+). It participates in glycolipid biosynthesis; lipid IV(A) biosynthesis; lipid IV(A) from (3R)-3-hydroxytetradecanoyl-[acyl-carrier-protein] and UDP-N-acetyl-alpha-D-glucosamine: step 6/6. In terms of biological role, transfers the gamma-phosphate of ATP to the 4'-position of a tetraacyldisaccharide 1-phosphate intermediate (termed DS-1-P) to form tetraacyldisaccharide 1,4'-bis-phosphate (lipid IVA). This is Tetraacyldisaccharide 4'-kinase from Vibrio parahaemolyticus serotype O3:K6 (strain RIMD 2210633).